Consider the following 80-residue polypeptide: Cell division protein ZapB (80 aa).

A coiled-coil region spans residues 3–80; sequence LEILEQLEAK…GLLGKMEEVE (78 aa). The segment at 41 to 62 is disordered; that stretch reads LEQANNGRSEVEQEAQKARDEQ. Residues 49–62 show a composition bias toward basic and acidic residues; the sequence is SEVEQEAQKARDEQ.

Belongs to the ZapB family. As to quaternary structure, homodimer. The ends of the coiled-coil dimer bind to each other, forming polymers. Interacts with FtsZ.

Its subcellular location is the cytoplasm. In terms of biological role, non-essential, abundant cell division factor that is required for proper Z-ring formation. It is recruited early to the divisome by direct interaction with FtsZ, stimulating Z-ring assembly and thereby promoting cell division earlier in the cell cycle. Its recruitment to the Z-ring requires functional FtsA or ZipA. This Aliivibrio salmonicida (strain LFI1238) (Vibrio salmonicida (strain LFI1238)) protein is Cell division protein ZapB.